Here is a 224-residue protein sequence, read N- to C-terminus: Thymidylate kinase (224 aa).

7 to 14 (GIEGSGKS) is an ATP binding site.

Belongs to the thymidylate kinase family.

It carries out the reaction dTMP + ATP = dTDP + ADP. In terms of biological role, phosphorylation of dTMP to form dTDP in both de novo and salvage pathways of dTTP synthesis. The sequence is that of Thymidylate kinase from Nitratidesulfovibrio vulgaris (strain DP4) (Desulfovibrio vulgaris).